The sequence spans 674 residues: HDA1 complex subunit 2 (674 aa).

The segment covering 185-196 (TVDSTINKDGTP) has biased composition (polar residues). The tract at residues 185–211 (TVDSTINKDGTPNSVSSTSSNSNSTSY) is disordered. Residues 197-211 (NSVSSTSSNSNSTSY) are compositionally biased toward low complexity. Positions 468 to 637 (FKKKQEVEKS…RNKFLKNYIT (170 aa)) form a coiled coil.

The protein belongs to the HDA2/3 family. HDA2 subfamily. In terms of assembly, heterodimer with HDA3. Component of the HDA1 histone deacetylase complex composed of at least one HDA1 homodimer and one HDA2/HDA3 heterodimer. Interacts with HDA1 and HDA3.

It is found in the nucleus. In terms of biological role, required for activity of HDA1 histone deacetylase complex. The HDA1 histone deacetylase complex is responsible for the deacetylation of lysine residues on the N-terminal part of the core histones (H2A, H2B, H3 and H4). Histone deacetylation gives a tag for epigenetic repression and plays an important role in transcriptional regulation, cell cycle progression and developmental events. This Saccharomyces cerevisiae (strain ATCC 204508 / S288c) (Baker's yeast) protein is HDA1 complex subunit 2 (HDA2).